The sequence spans 452 residues: Protein MLF3 (452 aa).

A phosphoserine mark is found at Ser-8, Ser-11, Ser-14, Ser-56, Ser-74, and Ser-79. The segment at 61 to 94 (SGSEVRTPSLRKNSNNVSSPLDNVIPTSRSASNS) is disordered. A compositionally biased stretch (polar residues) spans 64–81 (EVRTPSLRKNSNNVSSPL). At Thr-121 the chain carries Phosphothreonine. Phosphoserine occurs at positions 145, 156, and 160. A Phosphothreonine modification is found at Thr-169. Ser-171 bears the Phosphoserine mark. Positions 171–182 (SATLPSSESSPA) are enriched in polar residues. The disordered stretch occupies residues 171–220 (SATLPSSESSPASPDLKLSRSHSHSAATRPTLNNINNTGMTTTTSNGEPN). Thr-173 is subject to Phosphothreonine. 2 positions are modified to phosphoserine: Ser-183 and Ser-189. Positions 201-216 (TLNNINNTGMTTTTSN) are enriched in low complexity. Tyr-227 bears the Phosphotyrosine mark. Phosphoserine is present on residues Ser-228, Ser-257, and Ser-265. Disordered stretches follow at residues 290-321 (PATSPYVSPQQSARQYSNNANNNAKSPKNRSS) and 348-402 (IESS…AIGK). A Phosphotyrosine modification is found at Tyr-295. Ser-297, Ser-320, and Ser-353 each carry phosphoserine. The span at 299–321 (QQSARQYSNNANNNAKSPKNRSS) shows a compositional bias: low complexity. Positions 365–383 (PSFPLSSSLRSSANLASNP) are enriched in low complexity. Positions 384–398 (ELATQTPLSTSSSYT) are enriched in polar residues. A Phosphoserine modification is found at Ser-439.

It to yeast VHS2.

Its subcellular location is the cytoplasm. In Saccharomyces cerevisiae (strain ATCC 204508 / S288c) (Baker's yeast), this protein is Protein MLF3 (MLF3).